Consider the following 558-residue polypeptide: Cytochrome c oxidase subunit 1-beta (558 aa).

At 1-28 (MADAAVHGHGDHHDTRGFFTRWFMSTNH) the chain is on the cytoplasmic side. Residues 29–59 (KDIGILYLFTAGIVGLISVCFTVYMRMELQH) traverse the membrane as a helical segment. Over 60 to 82 (PGVQYMCLEGARLIADASAECTP) the chain is Periplasmic. Cys66 and Cys80 are joined by a disulfide. A helical transmembrane segment spans residues 83–120 (NGHLWNVMITYHGVLMMFFVVIPALFGGFGNYFMPLHI). His94 is a Fe(II)-heme a binding site. Topologically, residues 121–126 (GAPDMA) are cytoplasmic. The chain crosses the membrane as a helical span at residues 127–151 (FPRLNNLSYWMYVCGVALGVASLLA). Over 152-176 (PGGNDQMGSGVGWVLYPPLSTTEAG) the chain is Periplasmic. A helical membrane pass occupies residues 177-206 (YSMDLAIFAVHVSGASSILGAINIITTFLN). Over 207-217 (MRAPGMTLFKV) the chain is Cytoplasmic. A helical transmembrane segment spans residues 218–251 (PLFAWSVFITAWLILLSLPVLAGAITMLLMDRNF). Residues 252-262 (GTQFFDPAGGG) lie on the Periplasmic side of the membrane. Residues 263-299 (DPVLYQHILWFFGHPEVYIIILPGFGIISHVISTFAK) form a helical membrane-spanning segment. Residues His276 and Tyr280 each contribute to the Cu cation site. A cross-link (1'-histidyl-3'-tyrosine (His-Tyr)) is located at residues 276 to 280 (HPEVY). The Cytoplasmic segment spans residues 300–303 (KPIF). A helical membrane pass occupies residues 304 to 331 (GYLPMVLAMAAIGILGFVVWAHHMYTAG). Positions 325 and 326 each coordinate Cu cation. Residue Met332 is a topological domain, periplasmic. The chain crosses the membrane as a helical span at residues 333–364 (SLTQQAYFMLATMTIAVPTGIKVFSWIATMWG). Over 365–369 (GSIEF) the chain is Cytoplasmic. A helical membrane pass occupies residues 370–395 (KTPMLWAFGFLFLFTVGGVTGVVLSQ). The Periplasmic segment spans residues 396-404 (APLDRVYHD). The helical transmembrane segment at 405–437 (TYYVVAHFHYVMSLGAVFGIFAGVYYWIGKMSG) threads the bilayer. His411 is a binding site for heme a3. His413 contributes to the Fe(II)-heme a binding site. The Cytoplasmic segment spans residues 438-440 (RQY). The chain crosses the membrane as a helical span at residues 441-469 (PEWAGQLHFWMMFIGSNLIFFPQHFLGRQ). Over 470–478 (GMPRRYIDY) the chain is Periplasmic. A helical membrane pass occupies residues 479 to 514 (PVEFAYWNNISSIGAYISFASFLFFIGIVFYTLFAG). Topologically, residues 515–558 (KRVNVPNYWNEHADTLEWTLPSPPPEHTFETLPKREDWDRAHAH) are cytoplasmic.

It belongs to the heme-copper respiratory oxidase family. It depends on Cu(2+) as a cofactor. The cofactor is heme. In terms of processing, his-276 and Tyr-280 are involved in the formation of a copper-coordinated covalent cross-link at the active site of the catalytic subunit I.

The protein resides in the cell inner membrane. The enzyme catalyses 4 Fe(II)-[cytochrome c] + O2 + 8 H(+)(in) = 4 Fe(III)-[cytochrome c] + 2 H2O + 4 H(+)(out). The protein operates within energy metabolism; oxidative phosphorylation. Functionally, subunit I and II form the functional core of the enzyme complex. Electrons originating in cytochrome c are transferred via heme a and Cu(A) to the binuclear center formed by heme a3 and Cu(B). This cytochrome c oxidase shows proton pump activity across the membrane in addition to the electron transfer. The polypeptide is Cytochrome c oxidase subunit 1-beta (ctaDII) (Paracoccus denitrificans).